The primary structure comprises 422 residues: Serine--tRNA ligase (422 aa).

Residue 229 to 231 (TAE) participates in L-serine binding. 260–262 (RKE) is an ATP binding site. Glu-283 contacts L-serine. Residue 347–350 (EISS) coordinates ATP. Ser-383 is a binding site for L-serine.

Belongs to the class-II aminoacyl-tRNA synthetase family. Type-1 seryl-tRNA synthetase subfamily. As to quaternary structure, homodimer. The tRNA molecule binds across the dimer.

It localises to the cytoplasm. It catalyses the reaction tRNA(Ser) + L-serine + ATP = L-seryl-tRNA(Ser) + AMP + diphosphate + H(+). The catalysed reaction is tRNA(Sec) + L-serine + ATP = L-seryl-tRNA(Sec) + AMP + diphosphate + H(+). It functions in the pathway aminoacyl-tRNA biosynthesis; selenocysteinyl-tRNA(Sec) biosynthesis; L-seryl-tRNA(Sec) from L-serine and tRNA(Sec): step 1/1. In terms of biological role, catalyzes the attachment of serine to tRNA(Ser). Is also able to aminoacylate tRNA(Sec) with serine, to form the misacylated tRNA L-seryl-tRNA(Sec), which will be further converted into selenocysteinyl-tRNA(Sec). In Natranaerobius thermophilus (strain ATCC BAA-1301 / DSM 18059 / JW/NM-WN-LF), this protein is Serine--tRNA ligase.